The chain runs to 172 residues: uncharacterized protein (172 aa).

This is an uncharacterized protein from Microplitis demolitor bracovirus (isolate Webb) (MdBV).